We begin with the raw amino-acid sequence, 398 residues long: RNA exonuclease 3 (398 aa).

One can recognise an Exonuclease domain in the interval 239 to 385 (VLALDCEMGF…QDAIAAMDII (147 aa)).

Belongs to the REXO1/REXO3 family.

It localises to the cytoplasm. Its subcellular location is the nucleus. In terms of biological role, 3' to 5' exoribonuclease required for proper 3' end maturation of MRP RNA and of the U5L snRNA. The protein is RNA exonuclease 3 (REX3) of Candida glabrata (strain ATCC 2001 / BCRC 20586 / JCM 3761 / NBRC 0622 / NRRL Y-65 / CBS 138) (Yeast).